The sequence spans 325 residues: DNA-directed RNA polymerase subunit alpha (325 aa).

An alpha N-terminal domain (alpha-NTD) region spans residues 1 to 231 (MQNSLLKPRI…DQLNVFAALE (231 aa)). The tract at residues 246-325 (VDPILLRPVD…ENWPPAGLEK (80 aa)) is alpha C-terminal domain (alpha-CTD).

This sequence belongs to the RNA polymerase alpha chain family. Homodimer. The RNAP catalytic core consists of 2 alpha, 1 beta, 1 beta' and 1 omega subunit. When a sigma factor is associated with the core the holoenzyme is formed, which can initiate transcription.

It catalyses the reaction RNA(n) + a ribonucleoside 5'-triphosphate = RNA(n+1) + diphosphate. In terms of biological role, DNA-dependent RNA polymerase catalyzes the transcription of DNA into RNA using the four ribonucleoside triphosphates as substrates. This Janthinobacterium sp. (strain Marseille) (Minibacterium massiliensis) protein is DNA-directed RNA polymerase subunit alpha.